The chain runs to 726 residues: Delta-1-pyrroline-5-carboxylate synthase B (726 aa).

Residues 1-296 (MTEIDRSRAF…WAPVVDTTSR (296 aa)) form a glutamate 5-kinase region. Substrate-binding residues include S60, D157, and N176. Residues 196–197 (SD) and 236–242 (RGGMTAK) contribute to the ATP site. The segment at 297–717 (DMAVAARESS…YTHKDLPVLQ (421 aa)) is gamma-glutamyl phosphate reductase.

The protein in the N-terminal section; belongs to the glutamate 5-kinase family. It in the C-terminal section; belongs to the gamma-glutamyl phosphate reductase family.

The catalysed reaction is L-glutamate + ATP = L-glutamyl 5-phosphate + ADP. It carries out the reaction L-glutamate 5-semialdehyde + phosphate + NADP(+) = L-glutamyl 5-phosphate + NADPH + H(+). It participates in amino-acid biosynthesis; L-proline biosynthesis; L-glutamate 5-semialdehyde from L-glutamate: step 1/2. Its pathway is amino-acid biosynthesis; L-proline biosynthesis; L-glutamate 5-semialdehyde from L-glutamate: step 2/2. In terms of biological role, P5CS plays a key role in proline biosynthesis, leading to osmoregulation in plants. The sequence is that of Delta-1-pyrroline-5-carboxylate synthase B (P5CSB) from Arabidopsis thaliana (Mouse-ear cress).